Reading from the N-terminus, the 213-residue chain is Ras-like protein rasX (213 aa).

16 to 23 is a GTP binding site; that stretch reads GDGGVGKT. The Effector region signature appears at 38–46; the sequence is YDPTIEDSY. GTP-binding positions include 63-67 and 122-125; these read DTAGQ and NKSD. Cysteine 210 carries the post-translational modification Cysteine methyl ester. The S-geranylgeranyl cysteine moiety is linked to residue cysteine 210. A propeptide spans 211–213 (removed in mature form); sequence KMM.

Belongs to the small GTPase superfamily. Ras family.

Its subcellular location is the cell membrane. It catalyses the reaction GTP + H2O = GDP + phosphate + H(+). In terms of biological role, ras proteins bind GDP/GTP and possess intrinsic GTPase activity. This is Ras-like protein rasX (rasX) from Dictyostelium discoideum (Social amoeba).